The primary structure comprises 356 residues: MSDVSAVDKPRVRVLSLNGGGARGMFTISILAEIERILARKHPHQDIKIGDYFDLITGTSIGGILALGLATGKSARELESVFFDKAKDIFPTRWSLVNLCKALCAPIYNSSPLRETIEMMIGAETTFNDLTRRVMIPAVNLSTGKPLFFKTPHNPDFTRDGPLKLIDAALATSAAPTYFAPHYCKDLRSYFADGGLVANNPSYIGLLEVFRDMKSDFDVSHKDVYILNIGTVGEDYSLSPSLLSKKRWTGYCHLWGMGKRLVLTTMTANQHLHKNMLLRELALHDALDNYLYLDEVIPNEAASDITLDNASDSSLQNLSARGKQLANVQFAQNQKLKNFFISPAKPFKRTDVQEKL.

The region spanning 15 to 206 is the PNPLA domain; sequence LSLNGGGARG…VANNPSYIGL (192 aa). A GXGXXG motif is present at residues 19-24; the sequence is GGGARG. The GXSXG signature appears at 58–62; sequence GTSIG. Serine 60 functions as the Nucleophile in the catalytic mechanism. Residue aspartate 193 is the Proton acceptor of the active site. Residues 193–195 carry the DGA/G motif; the sequence is DGG.

The protein belongs to the patatin family.

The catalysed reaction is a 1,2-diacyl-sn-glycero-3-phosphocholine + H2O = a 2-acyl-sn-glycero-3-phosphocholine + a fatty acid + H(+). It catalyses the reaction 1,2-di-(9Z-octadecenoyl)-sn-glycero-3-phosphoethanolamine + 2 H2O = sn-glycero-3-phosphoethanolamine + 2 (9Z)-octadecenoate + 2 H(+). Its activity is regulated as follows. Phospholipase activity is specifically activated upon 3',3'-cGAMP binding, which is produced by the cognate cyclic nucleotide synthase encoded in the same operon. In terms of biological role, effector phospholipase of a CBASS antiviral system. CBASS (cyclic oligonucleotide-based antiphage signaling system) provides immunity against bacteriophages. The CD-NTase protein (DncV) synthesizes cyclic nucleotides in response to infection; these serve as specific second messenger signals. The signals activate a diverse range of effectors, leading to bacterial cell death and thus abortive phage infection. A type II-A(GA) CBASS system. Functionally, phospholipase that is activated upon binding to the cyclic dinucleotide (CDN) second messenger 3',3'-cyclic GMP-AMP (cGAMP). Degrades phospholipids in the cell membrane. Its function is as follows. Protects E.coli against phage infection. When capV and dncV are introduced in E.coli MG1655 there is 1000-fold protection against phage P1; protection against other phage (T2, T4, T5, T6 and lambda-vir) requires the 2 subsequent genes (cap2 and cap3). Upon P1 phage infection the activating molecule is produced between 30 and 40 minutes. Activation leads to bacterial cell lysis and death, which occurs before the phage has finished its replication cycle, thus protecting non-infected bacteria by aborting the phage infection and preventing its propagation. In another paper the capV-dncV-cap2-cap3 operon gives 10(4)-10(5)-fold protection against phages lambda, T2, T4 and T6, about 1000-fold protection against P1 and 10-fold protection against T5. The chain is cGAMP-activated phospholipase from Escherichia coli (strain TW11681).